The primary structure comprises 142 residues: MKLKIKKLDELAIIPFYAHKGDAGLDLFSIDESTINPGESKLIHTGISIELPSGTEAQIRPRSGLALKHQITVLNTPGTIDETYRGEIGIILINHGKNSFQVTKRMKIAQMVITSVLSVKVEEVNQLSTTQRDINGFGSTGT.

Substrate is bound by residues 62-64 (RSG), Asn75, and 79-81 (TID).

Belongs to the dUTPase family. Requires Mg(2+) as cofactor.

It catalyses the reaction dUTP + H2O = dUMP + diphosphate + H(+). Its pathway is pyrimidine metabolism; dUMP biosynthesis; dUMP from dCTP (dUTP route): step 2/2. In terms of biological role, this enzyme is involved in nucleotide metabolism: it produces dUMP, the immediate precursor of thymidine nucleotides and it decreases the intracellular concentration of dUTP so that uracil cannot be incorporated into DNA. This chain is Deoxyuridine 5'-triphosphate nucleotidohydrolase, found in Trichodesmium erythraeum (strain IMS101).